Consider the following 455-residue polypeptide: Exodeoxyribonuclease 7 large subunit (455 aa).

The protein belongs to the XseA family. As to quaternary structure, heterooligomer composed of large and small subunits.

It localises to the cytoplasm. It carries out the reaction Exonucleolytic cleavage in either 5'- to 3'- or 3'- to 5'-direction to yield nucleoside 5'-phosphates.. In terms of biological role, bidirectionally degrades single-stranded DNA into large acid-insoluble oligonucleotides, which are then degraded further into small acid-soluble oligonucleotides. This chain is Exodeoxyribonuclease 7 large subunit, found in Oceanobacillus iheyensis (strain DSM 14371 / CIP 107618 / JCM 11309 / KCTC 3954 / HTE831).